The primary structure comprises 574 residues: Aspartate--tRNA ligase (574 aa).

E169 is a binding site for L-aspartate. Positions 193–196 are aspartate; sequence QLFK. R215 provides a ligand contact to L-aspartate. ATP is bound by residues 215–217 and Q224; that span reads RDE. H437 contacts L-aspartate. E471 is a binding site for ATP. L-aspartate is bound at residue R478. Position 523–526 (523–526) interacts with ATP; the sequence is GLDR.

It belongs to the class-II aminoacyl-tRNA synthetase family. Type 1 subfamily. Homodimer.

It is found in the cytoplasm. It catalyses the reaction tRNA(Asp) + L-aspartate + ATP = L-aspartyl-tRNA(Asp) + AMP + diphosphate. Functionally, catalyzes the attachment of L-aspartate to tRNA(Asp) in a two-step reaction: L-aspartate is first activated by ATP to form Asp-AMP and then transferred to the acceptor end of tRNA(Asp). This is Aspartate--tRNA ligase from Mycoplasma mycoides subsp. mycoides SC (strain CCUG 32753 / NCTC 10114 / PG1).